The chain runs to 637 residues: Multicopper oxidase LPR1 homolog 5 (637 aa).

An N-terminal signal peptide occupies residues 1–21 (MSPRIQQLAAVLLAAVVVVAA). A glycan (N-linked (GlcNAc...) asparagine) is linked at N100. The Cu cation site is built by H209 and H211. The N-linked (GlcNAc...) asparagine glycan is linked to N234. H257 and H259 together coordinate Cu cation. 6 N-linked (GlcNAc...) asparagine glycosylation sites follow: N308, N349, N357, N425, N482, and N516. Positions 334-406 (PYLSVQRRRY…IVDFSRLPAA (73 aa)) constitute a Plastocyanin-like domain. H522, H525, and H527 together coordinate Cu cation. The N-linked (GlcNAc...) asparagine glycan is linked to N553. Cu cation-binding residues include H618, C619, H620, H624, and M629.

This sequence belongs to the multicopper oxidase family. Requires Cu cation as cofactor. As to expression, highly expressed in roots and basal stems.

The protein localises to the endoplasmic reticulum membrane. Its function is as follows. Multicopper oxidase that may play a role in the maintenance of inorganic phosphate homeostasis. The polypeptide is Multicopper oxidase LPR1 homolog 5 (Oryza sativa subsp. japonica (Rice)).